We begin with the raw amino-acid sequence, 365 residues long: Formamidopyrimidine-DNA glycosylase (365 aa).

The Schiff-base intermediate with DNA role is filled by Pro-2. The active-site Proton donor is the Glu-3. The active-site Proton donor; for beta-elimination activity is Lys-61. Residues 121 to 150 are disordered; the sequence is RGRLAGHGDGMDGTSRTGSTLPGTGGTENS. Positions 134–150 are enriched in polar residues; sequence TSRTGSTLPGTGGTENS. The DNA site is built by His-186, Arg-205, and Arg-246. The FPG-type zinc finger occupies 331–365; it reads RVYGRGGQPCRHCGTTLATAQVAGRTTVFCPQCQR. Arg-355 serves as the catalytic Proton donor; for delta-elimination activity.

Belongs to the FPG family. Monomer. It depends on Zn(2+) as a cofactor.

It catalyses the reaction Hydrolysis of DNA containing ring-opened 7-methylguanine residues, releasing 2,6-diamino-4-hydroxy-5-(N-methyl)formamidopyrimidine.. It carries out the reaction 2'-deoxyribonucleotide-(2'-deoxyribose 5'-phosphate)-2'-deoxyribonucleotide-DNA = a 3'-end 2'-deoxyribonucleotide-(2,3-dehydro-2,3-deoxyribose 5'-phosphate)-DNA + a 5'-end 5'-phospho-2'-deoxyribonucleoside-DNA + H(+). In terms of biological role, involved in base excision repair of DNA damaged by oxidation or by mutagenic agents. Acts as a DNA glycosylase that recognizes and removes damaged bases. Has a preference for oxidized purines, such as 7,8-dihydro-8-oxoguanine (8-oxoG). Has AP (apurinic/apyrimidinic) lyase activity and introduces nicks in the DNA strand. Cleaves the DNA backbone by beta-delta elimination to generate a single-strand break at the site of the removed base with both 3'- and 5'-phosphates. The chain is Formamidopyrimidine-DNA glycosylase from Nitratidesulfovibrio vulgaris (strain ATCC 29579 / DSM 644 / CCUG 34227 / NCIMB 8303 / VKM B-1760 / Hildenborough) (Desulfovibrio vulgaris).